Here is a 218-residue protein sequence, read N- to C-terminus: Protein-L-isoaspartate O-methyltransferase (218 aa).

Residue Ser60 is part of the active site.

This sequence belongs to the methyltransferase superfamily. L-isoaspartyl/D-aspartyl protein methyltransferase family.

The protein resides in the cytoplasm. The catalysed reaction is [protein]-L-isoaspartate + S-adenosyl-L-methionine = [protein]-L-isoaspartate alpha-methyl ester + S-adenosyl-L-homocysteine. Catalyzes the methyl esterification of L-isoaspartyl residues in peptides and proteins that result from spontaneous decomposition of normal L-aspartyl and L-asparaginyl residues. It plays a role in the repair and/or degradation of damaged proteins. This is Protein-L-isoaspartate O-methyltransferase from Roseiflexus sp. (strain RS-1).